We begin with the raw amino-acid sequence, 158 residues long: Small ribosomal subunit protein uS7 (158 aa).

It belongs to the universal ribosomal protein uS7 family. As to quaternary structure, part of the 30S ribosomal subunit. Contacts proteins S9 and S11.

Functionally, one of the primary rRNA binding proteins, it binds directly to 16S rRNA where it nucleates assembly of the head domain of the 30S subunit. Is located at the subunit interface close to the decoding center, probably blocks exit of the E-site tRNA. This Gluconobacter oxydans (strain 621H) (Gluconobacter suboxydans) protein is Small ribosomal subunit protein uS7.